The primary structure comprises 214 residues: Probable nicotinate-nucleotide adenylyltransferase (214 aa).

The protein belongs to the NadD family.

It catalyses the reaction nicotinate beta-D-ribonucleotide + ATP + H(+) = deamido-NAD(+) + diphosphate. It functions in the pathway cofactor biosynthesis; NAD(+) biosynthesis; deamido-NAD(+) from nicotinate D-ribonucleotide: step 1/1. Catalyzes the reversible adenylation of nicotinate mononucleotide (NaMN) to nicotinic acid adenine dinucleotide (NaAD). The sequence is that of Probable nicotinate-nucleotide adenylyltransferase from Aeromonas hydrophila subsp. hydrophila (strain ATCC 7966 / DSM 30187 / BCRC 13018 / CCUG 14551 / JCM 1027 / KCTC 2358 / NCIMB 9240 / NCTC 8049).